The following is a 107-amino-acid chain: Pathogenesis-related protein PR-4 (107 aa).

A Barwin domain is found at 1 to 107 (QNINWDLRTA…VNYDFVDCGD (107 aa)). Cystine bridges form between Cys14–Cys46, Cys35–Cys69, and Cys49–Cys105.

Preferentially expressed in the tissue surrounding the abscission zone of fruitlets.

The protein resides in the secreted. The protein localises to the cell wall. In terms of biological role, may be involved in protecting plant tissues from pathogen infection. The sequence is that of Pathogenesis-related protein PR-4 from Prunus persica (Peach).